The primary structure comprises 361 residues: Isocitrate dehydrogenase [NAD] subunit 1, mitochondrial (361 aa).

Residues 1 to 12 constitute a mitochondrion transit peptide; the sequence is MLRQGIAAQKKS. Substrate is bound by residues Arg110, Arg141, and Asp229. Residue Asp229 coordinates Mg(2+).

This sequence belongs to the isocitrate and isopropylmalate dehydrogenases family. In terms of assembly, octamer of two non-identical subunits IDH1 and IDH2. It depends on Mg(2+) as a cofactor. Mn(2+) serves as cofactor.

It is found in the mitochondrion. The catalysed reaction is D-threo-isocitrate + NAD(+) = 2-oxoglutarate + CO2 + NADH. In terms of biological role, performs an essential role in the oxidative function of the citric acid cycle. The sequence is that of Isocitrate dehydrogenase [NAD] subunit 1, mitochondrial (IDH1) from Kluyveromyces lactis (strain ATCC 8585 / CBS 2359 / DSM 70799 / NBRC 1267 / NRRL Y-1140 / WM37) (Yeast).